The following is a 126-amino-acid chain: Glycine cleavage system H protein (126 aa).

A Lipoyl-binding domain is found at 21-103 (TVTVGISDHA…YESGWIARIK (83 aa)). K62 carries the N6-lipoyllysine modification.

This sequence belongs to the GcvH family. In terms of assembly, the glycine cleavage system is composed of four proteins: P, T, L and H. It depends on (R)-lipoate as a cofactor.

Functionally, the glycine cleavage system catalyzes the degradation of glycine. The H protein shuttles the methylamine group of glycine from the P protein to the T protein. This chain is Glycine cleavage system H protein, found in Aliivibrio fischeri (strain ATCC 700601 / ES114) (Vibrio fischeri).